A 142-amino-acid chain; its full sequence is Large ribosomal subunit protein uL13 (142 aa).

This sequence belongs to the universal ribosomal protein uL13 family. As to quaternary structure, part of the 50S ribosomal subunit.

Its function is as follows. This protein is one of the early assembly proteins of the 50S ribosomal subunit, although it is not seen to bind rRNA by itself. It is important during the early stages of 50S assembly. This is Large ribosomal subunit protein uL13 from Francisella tularensis subsp. mediasiatica (strain FSC147).